A 333-amino-acid polypeptide reads, in one-letter code: Phosphoribosylformylglycinamidine cyclo-ligase (333 aa).

The protein belongs to the AIR synthase family.

It localises to the cytoplasm. It carries out the reaction 2-formamido-N(1)-(5-O-phospho-beta-D-ribosyl)acetamidine + ATP = 5-amino-1-(5-phospho-beta-D-ribosyl)imidazole + ADP + phosphate + H(+). It functions in the pathway purine metabolism; IMP biosynthesis via de novo pathway; 5-amino-1-(5-phospho-D-ribosyl)imidazole from N(2)-formyl-N(1)-(5-phospho-D-ribosyl)glycinamide: step 2/2. This chain is Phosphoribosylformylglycinamidine cyclo-ligase, found in Clostridium perfringens (strain ATCC 13124 / DSM 756 / JCM 1290 / NCIMB 6125 / NCTC 8237 / Type A).